Consider the following 323-residue polypeptide: Aldo-keto reductase family 1 member C2 (323 aa).

NADP(+)-binding positions include 20-24 (GFGTY) and Asp-50. Substrate is bound at residue Tyr-24. The active-site Proton donor is Tyr-55. His-117 is a substrate binding site. NADP(+) is bound by residues 166–167 (SN), Gln-190, and 216–222 (YSALGSH). Residues His-222 and Trp-227 each coordinate substrate. 270 to 280 (KSYNEQRIRQN) lines the NADP(+) pocket.

It belongs to the aldo/keto reductase family. As to expression, expressed in fetal testes. Expressed in fetal and adult adrenal glands.

The protein resides in the cytoplasm. It is found in the cytosol. The enzyme catalyses a 3alpha-hydroxysteroid + NADP(+) = a 3-oxosteroid + NADPH + H(+). It catalyses the reaction a 3alpha-hydroxysteroid + NAD(+) = a 3-oxosteroid + NADH + H(+). The catalysed reaction is 5alpha-androstane-3alpha,17beta-diol + NADP(+) = 17beta-hydroxy-5alpha-androstan-3-one + NADPH + H(+). It carries out the reaction 5alpha-androstane-3alpha,17beta-diol + NAD(+) = 17beta-hydroxy-5alpha-androstan-3-one + NADH + H(+). The enzyme catalyses 5alpha-androstane-3alpha,17beta-diol + NAD(+) = androsterone + NADH + H(+). It catalyses the reaction 17beta-estradiol + NADP(+) = estrone + NADPH + H(+). The catalysed reaction is 17beta-estradiol + NAD(+) = estrone + NADH + H(+). It carries out the reaction (20S)-hydroxypregn-4-en-3-one + NADP(+) = progesterone + NADPH + H(+). The enzyme catalyses (20S)-hydroxypregn-4-en-3-one + NAD(+) = progesterone + NADH + H(+). It catalyses the reaction androsterone + NADP(+) = 5alpha-androstan-3,17-dione + NADPH + H(+). The catalysed reaction is (3beta,5alpha,17beta)-3-hydroxy-androstan-17-yl sulfate + NADP(+) = 5alpha-dihydrotestosterone sulfate + NADPH + H(+). It carries out the reaction (1R,2R)-1,2-dihydrobenzene-1,2-diol + NADP(+) = catechol + NADPH + H(+). The enzyme catalyses (S)-indan-1-ol + NAD(+) = indan-1-one + NADH + H(+). It catalyses the reaction (S)-indan-1-ol + NADP(+) = indan-1-one + NADPH + H(+). It functions in the pathway steroid metabolism. With respect to regulation, inhibited by hexestrol with an IC(50) of 2.8 uM, 1,10-phenanthroline with an IC(50) of 2100 uM, 1,7-phenanthroline with an IC(50) of 1500 uM, flufenamic acid with an IC(50) of 0.9 uM, indomethacin with an IC(50) of 75 uM, ibuprofen with an IC(50) of 6.9 uM, lithocholic acid with an IC(50) of 0.07 uM, ursodeoxycholic acid with an IC(50) of 0.08 uM and chenodeoxycholic acid with an IC(50) of 0.13 uM. The oxidation reaction is inhibited by low micromolar concentrations of NADPH. Functionally, cytosolic aldo-keto reductase that catalyzes the NADH and NADPH-dependent reduction of ketosteroids to hydroxysteroids. Most probably acts as a reductase in vivo since the oxidase activity measured in vitro is inhibited by physiological concentrations of NADPH. Displays a broad positional specificity acting on positions 3, 17 and 20 of steroids and regulates the metabolism of hormones like estrogens and androgens. Works in concert with the 5-alpha/5-beta-steroid reductases to convert steroid hormones into the 3-alpha/5-alpha and 3-alpha/5-beta-tetrahydrosteroids. Catalyzes the inactivation of the most potent androgen 5-alpha-dihydrotestosterone (5-alpha-DHT) to 5-alpha-androstane-3-alpha,17-beta-diol (3-alpha-diol). Also specifically able to produce 17beta-hydroxy-5alpha-androstan-3-one/5alphaDHT. May also reduce conjugated steroids such as 5alpha-dihydrotestosterone sulfate. Displays affinity for bile acids. The polypeptide is Aldo-keto reductase family 1 member C2 (AKR1C2) (Homo sapiens (Human)).